The following is an 88-amino-acid chain: Sec-independent protein translocase protein TatA (88 aa).

Residues 1–21 (MGGIGIWQLAIITVIVILLFG) traverse the membrane as a helical segment. The interval 46-88 (DNDKDSTQVDDKDSTQVDDNAKQPSNKKVEENIKEQSKEKDRA) is disordered.

This sequence belongs to the TatA/E family. In terms of assembly, the Tat system comprises two distinct complexes: a TatABC complex, containing multiple copies of TatA, TatB and TatC subunits, and a separate TatA complex, containing only TatA subunits. Substrates initially bind to the TatABC complex, which probably triggers association of the separate TatA complex to form the active translocon.

Its subcellular location is the cell inner membrane. Functionally, part of the twin-arginine translocation (Tat) system that transports large folded proteins containing a characteristic twin-arginine motif in their signal peptide across membranes. TatA could form the protein-conducting channel of the Tat system. The sequence is that of Sec-independent protein translocase protein TatA from Psychromonas ingrahamii (strain DSM 17664 / CCUG 51855 / 37).